We begin with the raw amino-acid sequence, 569 residues long: Probable pyruvate decarboxylase Pdc101 (569 aa).

Substrate contacts are provided by D33 and H120. At S233 the chain carries Phosphoserine. The tract at residues 396 to 478 (DSWFNGLQMK…FLLNNRGYTI (83 aa)) is thiamine pyrophosphate binding. Mg(2+) is bound by residues D446, N473, and G475. E479 contacts substrate. Position 521 is a phosphothreonine (T521). Phosphoserine is present on S522.

Belongs to the TPP enzyme family. Homotetramer. Requires a metal cation as cofactor. It depends on thiamine diphosphate as a cofactor.

It catalyses the reaction a 2-oxocarboxylate + H(+) = an aldehyde + CO2. The polypeptide is Probable pyruvate decarboxylase Pdc101 (pdc101) (Schizosaccharomyces pombe (strain 972 / ATCC 24843) (Fission yeast)).